A 1625-amino-acid polypeptide reads, in one-letter code: E3 ubiquitin-protein ligase KEG (1625 aa).

The RING-type zinc-finger motif lies at 10–56 (CSVCHTRYNEDERVPLLLQCGHGFCKDCLSKMFSTSSDTTLTCPRCR). Residues 91 to 106 (YTDDEDDDDEEDGSDE) are compositionally biased toward acidic residues. The interval 91–110 (YTDDEDDDDEEDGSDEDGAR) is disordered. Positions 141-427 (RQIGEESSSG…TFNAMLATFL (287 aa)) constitute a Protein kinase domain. ATP-binding positions include 147–155 (SSSGGFGGV) and lysine 176. 11 ANK repeats span residues 467-496 (DNPN…AGGG), 510-540 (DGQS…NVDI), 544-573 (DGDP…NVRS), 579-608 (SGPS…DPNA), 612-641 (EGET…SRSM), 647-676 (KCLT…PEEI), 685-720 (PVGT…DPTA), 725-754 (HGRT…NANI), 758-787 (HNTI…DCNI), 791-826 (EGDN…AVDV), and 832-863 (KTVR…HLSP).

As to quaternary structure, interacts with ABI5 and EDR1. Autophosphotylated and autoubiquitinated in vitro. Post-translationally, phosphorylation enhances self-ubiquitination. In terms of processing, autoubiquitinated in response to abscisic acid (ABA) and subsequently targeted to proteolysis. In terms of tissue distribution, expressed in all tissues of young seedlings. In flowering plants, only detected in the youngest part of the stem, anthers and the receptacle of immature siliques. Not found in mature leave, older parts of the stem, flower parts other than anthers or mature siliques.

It is found in the golgi apparatus. Its subcellular location is the trans-Golgi network. The protein resides in the early endosome. It carries out the reaction L-seryl-[protein] + ATP = O-phospho-L-seryl-[protein] + ADP + H(+). It catalyses the reaction L-threonyl-[protein] + ATP = O-phospho-L-threonyl-[protein] + ADP + H(+). The enzyme catalyses S-ubiquitinyl-[E2 ubiquitin-conjugating enzyme]-L-cysteine + [acceptor protein]-L-lysine = [E2 ubiquitin-conjugating enzyme]-L-cysteine + N(6)-ubiquitinyl-[acceptor protein]-L-lysine.. It participates in protein modification; protein ubiquitination. Mediates E2-dependent protein ubiquitination. Acts as a negative regulator of abscisic acid signaling. Required for ABI5 degradation, by mediating its ubiquitination. Together with EDR1, may regulate endocytic trafficking and/or the formation of signaling complexes on trans-Golgi network (TGN)/ early endosome (EE) vesicles during stress responses. The polypeptide is E3 ubiquitin-protein ligase KEG (KEG) (Arabidopsis thaliana (Mouse-ear cress)).